Here is a 244-residue protein sequence, read N- to C-terminus: MDLGLAGRRALVTGAGKGIGRSTVLALKAAGAQVVAVSRTREDLDDLVRECPGVEPVCVDLADWEATEQALSNVGPADLLVNNAAVALLQPFLEVTKEACVTSFNVNLRAVIQVSQIVAKGMIARGVPGAIVNVSSQASQRALTNHTVYCSTKGALYMLTKMMALELGPHKIRVNAVNPTVVMTPMGRTNWSDPHKAKAMLDRIPLGKFAEVENVVDTILFLLSNRSGMTTGSTLPVDGGFLAT.

Methionine 1 carries the N-acetylmethionine modification. Leucine 11 to arginine 39 provides a ligand contact to NADP(+). At arginine 21 the chain carries Omega-N-methylarginine. Serine 136 serves as a coordination point for substrate. Tyrosine 149 (proton acceptor) is an active-site residue. Lysine 153 is a catalytic residue.

This sequence belongs to the short-chain dehydrogenases/reductases (SDR) family. In terms of assembly, homotetramer. In terms of tissue distribution, highly expressed in kidney and liver. Expressed in epididymis. Expressed at intermediate level in lung. Weakly expressed in brain, heart, spleen and testis.

The protein localises to the membrane. It carries out the reaction xylitol + NADP(+) = L-xylulose + NADPH + H(+). Functionally, catalyzes the NADPH-dependent reduction of several pentoses, tetroses, trioses, alpha-dicarbonyl compounds and L-xylulose. Participates in the uronate cycle of glucose metabolism. May play a role in the water absorption and cellular osmoregulation in the proximal renal tubules by producing xylitol, an osmolyte, thereby preventing osmolytic stress from occurring in the renal tubules. This is L-xylulose reductase (DCXR) from Cavia porcellus (Guinea pig).